We begin with the raw amino-acid sequence, 110 residues long: Phosphoribosyl-ATP pyrophosphatase (110 aa).

Belongs to the PRA-PH family.

It is found in the cytoplasm. The enzyme catalyses 1-(5-phospho-beta-D-ribosyl)-ATP + H2O = 1-(5-phospho-beta-D-ribosyl)-5'-AMP + diphosphate + H(+). It participates in amino-acid biosynthesis; L-histidine biosynthesis; L-histidine from 5-phospho-alpha-D-ribose 1-diphosphate: step 2/9. This is Phosphoribosyl-ATP pyrophosphatase from Teredinibacter turnerae (strain ATCC 39867 / T7901).